Reading from the N-terminus, the 420-residue chain is Glucose-1-phosphate adenylyltransferase (420 aa).

Residues tyrosine 108, glycine 173, 188–189, and serine 206 each bind alpha-D-glucose 1-phosphate; that span reads EK.

This sequence belongs to the bacterial/plant glucose-1-phosphate adenylyltransferase family. In terms of assembly, homotetramer.

It catalyses the reaction alpha-D-glucose 1-phosphate + ATP + H(+) = ADP-alpha-D-glucose + diphosphate. Its pathway is glycan biosynthesis; glycogen biosynthesis. In terms of biological role, involved in the biosynthesis of ADP-glucose, a building block required for the elongation reactions to produce glycogen. Catalyzes the reaction between ATP and alpha-D-glucose 1-phosphate (G1P) to produce pyrophosphate and ADP-Glc. The protein is Glucose-1-phosphate adenylyltransferase of Paraburkholderia phytofirmans (strain DSM 17436 / LMG 22146 / PsJN) (Burkholderia phytofirmans).